We begin with the raw amino-acid sequence, 257 residues long: Trans-aconitate 2-methyltransferase (257 aa).

The protein belongs to the methyltransferase superfamily. Tam family.

It is found in the cytoplasm. It catalyses the reaction trans-aconitate + S-adenosyl-L-methionine = (E)-3-(methoxycarbonyl)pent-2-enedioate + S-adenosyl-L-homocysteine. Catalyzes the S-adenosylmethionine monomethyl esterification of trans-aconitate. This chain is Trans-aconitate 2-methyltransferase, found in Rhizobium meliloti (strain 1021) (Ensifer meliloti).